The following is a 155-amino-acid chain: UPF0178 protein mlr0875 (155 aa).

It belongs to the UPF0178 family.

The chain is UPF0178 protein mlr0875 from Mesorhizobium japonicum (strain LMG 29417 / CECT 9101 / MAFF 303099) (Mesorhizobium loti (strain MAFF 303099)).